Here is a 366-residue protein sequence, read N- to C-terminus: Chorismate synthase (366 aa).

2 residues coordinate NADP(+): Arg48 and Arg54. FMN contacts are provided by residues 125 to 127 (RSS), 238 to 239 (NA), Gly278, 293 to 297 (KPTSS), and Arg319.

It belongs to the chorismate synthase family. Homotetramer. FMNH2 is required as a cofactor.

It catalyses the reaction 5-O-(1-carboxyvinyl)-3-phosphoshikimate = chorismate + phosphate. The protein operates within metabolic intermediate biosynthesis; chorismate biosynthesis; chorismate from D-erythrose 4-phosphate and phosphoenolpyruvate: step 7/7. Its function is as follows. Catalyzes the anti-1,4-elimination of the C-3 phosphate and the C-6 proR hydrogen from 5-enolpyruvylshikimate-3-phosphate (EPSP) to yield chorismate, which is the branch point compound that serves as the starting substrate for the three terminal pathways of aromatic amino acid biosynthesis. This reaction introduces a second double bond into the aromatic ring system. This is Chorismate synthase from Neisseria gonorrhoeae (strain NCCP11945).